The chain runs to 100 residues: Large ribosomal subunit protein bL21 (100 aa).

Belongs to the bacterial ribosomal protein bL21 family. As to quaternary structure, part of the 50S ribosomal subunit. Contacts protein L20.

In terms of biological role, this protein binds to 23S rRNA in the presence of protein L20. This chain is Large ribosomal subunit protein bL21, found in Ureaplasma parvum serovar 3 (strain ATCC 27815 / 27 / NCTC 11736).